Reading from the N-terminus, the 208-residue chain is Adenylyl-sulfate kinase 3 (208 aa).

37–45 (GLSGSGKST) lines the ATP pocket. Substrate contacts are provided by residues D67, R70, R84, N87, 110–111 (IS), and G160. Catalysis depends on S111, which acts as the Phosphoserine intermediate.

This sequence belongs to the APS kinase family. As to expression, expressed in root vasculature, root tips, leaf epidermal and guard cells, pollen grains and radicle of immature seeds.

The protein resides in the cytoplasm. It localises to the cytosol. It carries out the reaction adenosine 5'-phosphosulfate + ATP = 3'-phosphoadenylyl sulfate + ADP + H(+). It functions in the pathway sulfur metabolism; hydrogen sulfide biosynthesis; sulfite from sulfate: step 2/3. Catalyzes the synthesis of activated sulfate for the sulfation of secondary metabolites, including the glucosinolates. Essential for plant reproduction and viability. The polypeptide is Adenylyl-sulfate kinase 3 (Arabidopsis thaliana (Mouse-ear cress)).